Consider the following 256-residue polypeptide: Cell division protein DivIB (256 aa).

Residues 1 to 23 (MSKDLISTDEYIKIKKKRKRIKK) lie on the Cytoplasmic side of the membrane. A helical transmembrane segment spans residues 24–44 (IVVLFIFLISILVTLCLKIPY). The region spanning 45-113 (FNIESIEIKG…NKLEIYVKER (69 aa)) is the POTRA domain. Topologically, residues 45-256 (FNIESIEIKG…EGNPVFYIEK (212 aa)) are extracellular.

Belongs to the FtsQ/DivIB family. DivIB subfamily.

The protein localises to the cell membrane. Functionally, cell division protein that may be involved in stabilizing or promoting the assembly of the division complex. This Clostridium botulinum (strain Loch Maree / Type A3) protein is Cell division protein DivIB.